The sequence spans 507 residues: Glycerol kinase (507 aa).

Thr15 is an ADP binding site. Residues Thr15, Thr16, and Ser17 each coordinate ATP. Thr15 is a sn-glycerol 3-phosphate binding site. Arg19 is an ADP binding site. Residues Arg85, Glu86, Tyr137, and Asp250 each contribute to the sn-glycerol 3-phosphate site. Positions 85, 86, 137, 250, and 251 each coordinate glycerol. 3 residues coordinate ADP: Thr272, Gly316, and Gly418. Residues Thr272, Gly316, and Gly418 each contribute to the ATP site.

The protein belongs to the FGGY kinase family.

The enzyme catalyses glycerol + ATP = sn-glycerol 3-phosphate + ADP + H(+). It functions in the pathway polyol metabolism; glycerol degradation via glycerol kinase pathway; sn-glycerol 3-phosphate from glycerol: step 1/1. Its activity is regulated as follows. Inhibited by fructose 1,6-bisphosphate (FBP). Functionally, key enzyme in the regulation of glycerol uptake and metabolism. Catalyzes the phosphorylation of glycerol to yield sn-glycerol 3-phosphate. The chain is Glycerol kinase from Malacoplasma penetrans (strain HF-2) (Mycoplasma penetrans).